A 343-amino-acid chain; its full sequence is MAVHACGAAAAVVALLSAAIALQWSPLYAVLQRALSLHTAHATKDMENLFQLVRNIVPALTSKKHKGQDGRIGIVGGCQEYTGAPYFAGISALKVGADLTHVFCAREAAPVIKSYSPELIVHPVLDSSNAVEEVEKWLPRLHALVVGPGLGRDDLLLNNVRGILESTKARDIPVVIDADGLWLVAQQPALIHSYHKAILTPNHVEFSRLWEAVLSSPMDSNDLKGSTLKLSQALGNITVVQKGEQDLISNGQQVLVCNQEGSSRRCGGQGDLLSGSLGVMVHWALRAGPEKTNGSSPLLVAAWGACTLTRECNRQAFQKYGRSTTTTDMITEVGTAFSRLFTT.

Residues 1 to 42 (MAVHACGAAAAVVALLSAAIALQWSPLYAVLQRALSLHTAHA) constitute a mitochondrion transit peptide. Residues 49–340 (LFQLVRNIVP…TEVGTAFSRL (292 aa)) enclose the YjeF C-terminal domain. K63 bears the N6-acetyllysine mark. Position 81 is a phosphotyrosine (Y81). Residues G149 and 202-208 (NHVEFSR) each bind (6S)-NADPHX. At S216 the chain carries Phosphoserine. Residues 242–246 (KGEQD) and 261–270 (GSSRRCGGQG) contribute to the ATP site. D271 provides a ligand contact to (6S)-NADPHX.

The protein belongs to the NnrD/CARKD family. Requires Mg(2+) as cofactor.

It is found in the mitochondrion. It catalyses the reaction (6S)-NADHX + ATP = ADP + phosphate + NADH + H(+). The catalysed reaction is (6S)-NADPHX + ATP = ADP + phosphate + NADPH + H(+). Functionally, catalyzes the dehydration of the S-form of NAD(P)HX at the expense of ATP, which is converted to ADP. Together with NAD(P)HX epimerase, which catalyzes the epimerization of the S- and R-forms, the enzyme allows the repair of both epimers of NAD(P)HX, a damaged form of NAD(P)H that is a result of enzymatic or heat-dependent hydration. The protein is ATP-dependent (S)-NAD(P)H-hydrate dehydratase of Mus musculus (Mouse).